The sequence spans 1045 residues: Protein madd-4 (1045 aa).

The N-terminal stretch at 1-23 (MKCSYTVVFLLFYLLIASFHVDA) is a signal peptide. 5 TSP type-1 domains span residues 24–71 (LSWA…KTCE), 236–292 (RCRW…NCVS), 294–510 (SCGR…HPCP), 512–572 (FWLT…NVVA), and 576–635 (TWVT…GSCS). 3 cysteine pairs are disulfide-bonded: cysteine 35–cysteine 65, cysteine 39–cysteine 70, and cysteine 50–cysteine 55. Asparagine 268 and asparagine 280 each carry an N-linked (GlcNAc...) asparagine glycan. The region spanning 637-732 (PELLSNRVFE…FTDRLQGNVT (96 aa)) is the Ig-like C2-type domain. Cysteine 674 and cysteine 722 are disulfide-bonded. N-linked (GlcNAc...) asparagine glycosylation is found at asparagine 730 and asparagine 781. Positions 811–873 (RWDIGHWSEC…TRPCHREDCP (63 aa)) constitute a TSP type-1 6 domain. N-linked (GlcNAc...) asparagine glycans are attached at residues asparagine 899 and asparagine 906. The TSP type-1 7 domain maps to 932-990 (CKAEWRTSDWGSCSSECGTGGVQLRLLSCVWISSGRPAGRNCEQMRRPHSARACVADEP). The PLAC domain occupies 1004–1041 (RDASCQDQSRFCDIIKLFHSCDSLEVRQKCCSTCTFVE).

Interacts with eva-1 (via the SUEL-type lectin domain). Interacts with unc-5. Interacts with unc-40; the interaction is required for the localization of unc-40 to postsynaptic domains. Isoform a forms homodimers and heterodimers with isoform b. Isoform b forms homodimers and heterodimers with isoform a. Isoform b interacts with nlg-1 (via extracellular domain); the interaction is required for nlg-1 localization to postsynaptic domains. Isoform b interacts (via the Ig-like C2-type domain) with nrx-1 (via C-terminus). As to expression, isoform a: Expressed in the commissural GABAergic and cholinergic motor neurons in the first larval stage but only in the cholinergic motor neurons in later larval stages and in adult animals. At the L1 larval stage, mainly localized at the nerve ring and at the dorsal cord. Isoform b: Expressed in the commissural GABAergic and cholinergic motor neurons whose cell bodies reside in the ventral nerve cord and which extend axons into the ventral and dorsal nerve cord. Also expressed in the head neurons RIA, RIC, lateral IL1s, lateral IL2s, OLLs, RMEs and SABs, all of which extend axons into the nerve ring. Expressed in the embryogenic blast cells and the corresponding terminally differentiated ventral cord motor neurons and head neurons.

It localises to the cell projection. It is found in the axon. Its subcellular location is the secreted. The protein localises to the synapse. The protein resides in the extracellular space. It localises to the extracellular matrix. Component of an extracellular matrix cue that is involved in the guidance of dorsoventral midline migrations and in the specification of postsynaptic domains at neuromuscular junctions (NMJs). Acts as a ligand for the netrin receptor unc-40 and the neuroligin receptor nlg-1. Secreted by the dorsal and ventral nerve cords to attract sensory axons and muscle membrane extensions called muscle arms. In parallel with unc-6 and slt-1, involved in the netrin receptor unc-40 dependent guidance of the AVM and PVM mechanosensory axons along the dorsal-ventral axis. The unc-40 coreceptor eva-1 is enhancing the responsiveness of unc-40 to the madd-4 guidance cue to attract the muscle arm extensions and AVM mechanosensory axons towards the dorsoventral midline. Acts as a synaptic organizer and is required for the specification of inhibitory GABAergic and excitatory cholinergic identities of postsynaptic domains at neuromuscular junctions (NMJs). Required for the recruitment of unc-40 to both cholinergic and GABAergic NMJs. Promotes the clustering of ACh receptors and GABA(A) receptors at postsynaptic sites during synaptogenesis. The binding to the presynaptic adhesion protein nrx-1 and to the neuroligin nlg-1 at postsynaptic sites promotes clustering of GABAergic receptors at postsynaptic NMJs, thereby contributing to normal GABAergic synaptic transmission. Its function is as follows. Isoform a and isoform c: Promotes the clustering of acetylcholine receptors (AChR) at excitatory cholinergic synapses of NMJs via the netrin receptor unc-40. Functionally, acts as a guidance cue in the attraction of muscle membrane extensions (muscle arms) to the dorsal cord and in cooperation with unc-6 to the ventral cord via the netrin receptor unc-40 and via the unc-40 coreceptor eva-1. Together with nrx-1, clusters netrin receptor unc-40 and neuroligin nlg-1 at postsynaptic sites of GABAergic NMJs, thereby promoting the recruitment of GABA(A) receptors at GABAergic synapses. Prevents the recruitment of GABAergic receptors to cholinergic synapses. In Caenorhabditis elegans, this protein is Protein madd-4.